The chain runs to 447 residues: Argininosuccinate synthase (447 aa).

ATP contacts are provided by residues 17–25 (AFSGGLDTS) and Ala43. An L-citrulline-binding site is contributed by Tyr99. Residues Gly129 and Thr131 each coordinate ATP. Residues Thr131, Asn135, and Asp136 each coordinate L-aspartate. An L-citrulline-binding site is contributed by Asn135. An ATP-binding site is contributed by Asp136. The L-citrulline site is built by Arg139 and Ser192. Residue Asp194 coordinates ATP. 3 residues coordinate L-citrulline: Thr201, Glu203, and Glu280.

It belongs to the argininosuccinate synthase family. Type 2 subfamily. Homotetramer.

Its subcellular location is the cytoplasm. The catalysed reaction is L-citrulline + L-aspartate + ATP = 2-(N(omega)-L-arginino)succinate + AMP + diphosphate + H(+). Its pathway is amino-acid biosynthesis; L-arginine biosynthesis; L-arginine from L-ornithine and carbamoyl phosphate: step 2/3. In Escherichia coli O157:H7, this protein is Argininosuccinate synthase (argG).